The chain runs to 92 residues: Putative pterin-4-alpha-carbinolamine dehydratase (92 aa).

Belongs to the pterin-4-alpha-carbinolamine dehydratase family.

It carries out the reaction (4aS,6R)-4a-hydroxy-L-erythro-5,6,7,8-tetrahydrobiopterin = (6R)-L-erythro-6,7-dihydrobiopterin + H2O. This Natronomonas pharaonis (strain ATCC 35678 / DSM 2160 / CIP 103997 / JCM 8858 / NBRC 14720 / NCIMB 2260 / Gabara) (Halobacterium pharaonis) protein is Putative pterin-4-alpha-carbinolamine dehydratase.